Consider the following 451-residue polypeptide: Probable D-serine dehydratase (451 aa).

An N6-(pyridoxal phosphate)lysine modification is found at lysine 119.

This sequence belongs to the serine/threonine dehydratase family. DsdA subfamily. Pyridoxal 5'-phosphate is required as a cofactor.

The enzyme catalyses D-serine = pyruvate + NH4(+). This Acidovorax ebreus (strain TPSY) (Diaphorobacter sp. (strain TPSY)) protein is Probable D-serine dehydratase.